Here is a 251-residue protein sequence, read N- to C-terminus: MIRKLAALIVAAAALQACAVSDRLSYVGQTPPMTPIQNPADLAGTGPSQLPMPMPRMPQQRYATNSTANNSLWTANSPTFFGDPRADQVGDIVTVNIAISDSAQLNNTTNRSRSSAEDSDLTSFLGADLTGFFNDNIDPTSMTSLGSTSSLAGSGSVNRTESISLTVAALVTQVLPNGNLVIAGRQEVRVNNEVRELLITGIARPQDIGSDNTIAHTQIAEARISYGGRGHLSDAQRPRYGQELYDILMPF.

The signal sequence occupies residues 1–17 (MIRKLAALIVAAAALQA). Residue Cys-18 is the site of N-palmitoyl cysteine attachment. Cys-18 carries the S-diacylglycerol cysteine lipid modification.

It belongs to the FlgH family. As to quaternary structure, the basal body constitutes a major portion of the flagellar organelle and consists of four rings (L,P,S, and M) mounted on a central rod.

It is found in the cell outer membrane. Its subcellular location is the bacterial flagellum basal body. Assembles around the rod to form the L-ring and probably protects the motor/basal body from shearing forces during rotation. The chain is Flagellar L-ring protein from Maricaulis maris (strain MCS10) (Caulobacter maris).